A 348-amino-acid chain; its full sequence is Methylthioribose-1-phosphate isomerase (348 aa).

Substrate-binding positions include 51 to 53 (RGA), arginine 94, and glutamine 199. The active-site Proton donor is the aspartate 240. A substrate-binding site is contributed by 250–251 (NK).

Belongs to the eIF-2B alpha/beta/delta subunits family. MtnA subfamily.

The catalysed reaction is 5-(methylsulfanyl)-alpha-D-ribose 1-phosphate = 5-(methylsulfanyl)-D-ribulose 1-phosphate. The protein operates within amino-acid biosynthesis; L-methionine biosynthesis via salvage pathway; L-methionine from S-methyl-5-thio-alpha-D-ribose 1-phosphate: step 1/6. In terms of biological role, catalyzes the interconversion of methylthioribose-1-phosphate (MTR-1-P) into methylthioribulose-1-phosphate (MTRu-1-P). The sequence is that of Methylthioribose-1-phosphate isomerase from Nitrosococcus oceani (strain ATCC 19707 / BCRC 17464 / JCM 30415 / NCIMB 11848 / C-107).